The sequence spans 438 residues: Xylose isomerase (438 aa).

Residues His100 and Asp103 contribute to the active site. 7 residues coordinate Mg(2+): Glu231, Glu267, His270, Asp295, Asp306, Asp308, and Asp338.

The protein belongs to the xylose isomerase family. In terms of assembly, homotetramer. Requires Mg(2+) as cofactor.

Its subcellular location is the cytoplasm. The catalysed reaction is alpha-D-xylose = alpha-D-xylulofuranose. This Pseudomonas savastanoi pv. phaseolicola (strain 1448A / Race 6) (Pseudomonas syringae pv. phaseolicola (strain 1448A / Race 6)) protein is Xylose isomerase.